A 276-amino-acid polypeptide reads, in one-letter code: MEKIPVLVAGALGKMGSEVIKAIYKSNDCELVAAIDNANEMEGVDIGTALGMDQMDVAVTADLEGSLCVASQSVRNSSGNAVLIDFTHPNVVYEHSRASIAYGVHPVIGTTGLSIVQLEELREFANKASIGAAIIPNFSVGMVLLQQAAAAAASFYDYAELTESHHNQKADAPSGTCIKTAEIIEEIGKSFNKTTIKEQESIKGSRGGLRESGLRLHSVRLPGIVAQQQVLFGSPGETYLLSHNTIDRSAYMPGVLHTIRKVRHLKSLVYGLEKIL.

Residues 10–15 (GALGKM), Asp-36, and 109–111 (GTT) each bind NAD(+). His-165 serves as the catalytic Proton donor/acceptor. A (S)-2,3,4,5-tetrahydrodipicolinate-binding site is contributed by His-166. Lys-169 functions as the Proton donor in the catalytic mechanism. 175-176 (GT) contacts (S)-2,3,4,5-tetrahydrodipicolinate.

It belongs to the DapB family.

It is found in the cytoplasm. It catalyses the reaction (S)-2,3,4,5-tetrahydrodipicolinate + NAD(+) + H2O = (2S,4S)-4-hydroxy-2,3,4,5-tetrahydrodipicolinate + NADH + H(+). The catalysed reaction is (S)-2,3,4,5-tetrahydrodipicolinate + NADP(+) + H2O = (2S,4S)-4-hydroxy-2,3,4,5-tetrahydrodipicolinate + NADPH + H(+). The protein operates within amino-acid biosynthesis; L-lysine biosynthesis via DAP pathway; (S)-tetrahydrodipicolinate from L-aspartate: step 4/4. Its function is as follows. Catalyzes the conversion of 4-hydroxy-tetrahydrodipicolinate (HTPA) to tetrahydrodipicolinate. This Prochlorococcus marinus (strain SARG / CCMP1375 / SS120) protein is 4-hydroxy-tetrahydrodipicolinate reductase.